A 464-amino-acid chain; its full sequence is Glutamate decarboxylase (464 aa).

Lys-274 is subject to N6-(pyridoxal phosphate)lysine.

Belongs to the group II decarboxylase family. Pyridoxal 5'-phosphate serves as cofactor.

It catalyses the reaction L-glutamate + H(+) = 4-aminobutanoate + CO2. Its function is as follows. Catalyzes the pyridoxal-dependent decarboxylation of glutamate to produce 4-aminobutanoate. Has weak activity with aspartate, but cannot complement an E.coli panD deletion mutant. This chain is Glutamate decarboxylase, found in Aliivibrio fischeri (strain ATCC 700601 / ES114) (Vibrio fischeri).